Consider the following 429-residue polypeptide: Histidine--tRNA ligase (429 aa).

The protein belongs to the class-II aminoacyl-tRNA synthetase family. As to quaternary structure, homodimer.

It localises to the cytoplasm. It carries out the reaction tRNA(His) + L-histidine + ATP = L-histidyl-tRNA(His) + AMP + diphosphate + H(+). The polypeptide is Histidine--tRNA ligase (Streptococcus pneumoniae (strain Hungary19A-6)).